Reading from the N-terminus, the 596-residue chain is Elongation factor 4 (596 aa).

The region spanning 2–184 (KHIRNFSIIA…VIVEQIPPPE (183 aa)) is the tr-type G domain. GTP contacts are provided by residues 14-19 (DHGKST) and 131-134 (NKID).

This sequence belongs to the TRAFAC class translation factor GTPase superfamily. Classic translation factor GTPase family. LepA subfamily.

It localises to the cell inner membrane. It carries out the reaction GTP + H2O = GDP + phosphate + H(+). Its function is as follows. Required for accurate and efficient protein synthesis under certain stress conditions. May act as a fidelity factor of the translation reaction, by catalyzing a one-codon backward translocation of tRNAs on improperly translocated ribosomes. Back-translocation proceeds from a post-translocation (POST) complex to a pre-translocation (PRE) complex, thus giving elongation factor G a second chance to translocate the tRNAs correctly. Binds to ribosomes in a GTP-dependent manner. In Shewanella sp. (strain MR-7), this protein is Elongation factor 4.